The following is a 376-amino-acid chain: Chaperone protein DnaJ (376 aa).

One can recognise a J domain in the interval Asp5–Gly70. A CR-type zinc finger spans residues Gly132 to Thr210. 8 residues coordinate Zn(2+): Cys145, Cys148, Cys162, Cys165, Cys184, Cys187, Cys198, and Cys201. CXXCXGXG motif repeat units lie at residues Cys145–Gly152, Cys162–Gly169, Cys184–Gly191, and Cys198–Gly205.

The protein belongs to the DnaJ family. As to quaternary structure, homodimer. Zn(2+) serves as cofactor.

It is found in the cytoplasm. Functionally, participates actively in the response to hyperosmotic and heat shock by preventing the aggregation of stress-denatured proteins and by disaggregating proteins, also in an autonomous, DnaK-independent fashion. Unfolded proteins bind initially to DnaJ; upon interaction with the DnaJ-bound protein, DnaK hydrolyzes its bound ATP, resulting in the formation of a stable complex. GrpE releases ADP from DnaK; ATP binding to DnaK triggers the release of the substrate protein, thus completing the reaction cycle. Several rounds of ATP-dependent interactions between DnaJ, DnaK and GrpE are required for fully efficient folding. Also involved, together with DnaK and GrpE, in the DNA replication of plasmids through activation of initiation proteins. The chain is Chaperone protein DnaJ from Shewanella amazonensis (strain ATCC BAA-1098 / SB2B).